Consider the following 233-residue polypeptide: 2-C-methyl-D-erythritol 4-phosphate cytidylyltransferase (233 aa).

Belongs to the IspD/TarI cytidylyltransferase family. IspD subfamily.

It carries out the reaction 2-C-methyl-D-erythritol 4-phosphate + CTP + H(+) = 4-CDP-2-C-methyl-D-erythritol + diphosphate. The protein operates within isoprenoid biosynthesis; isopentenyl diphosphate biosynthesis via DXP pathway; isopentenyl diphosphate from 1-deoxy-D-xylulose 5-phosphate: step 2/6. Its function is as follows. Catalyzes the formation of 4-diphosphocytidyl-2-C-methyl-D-erythritol from CTP and 2-C-methyl-D-erythritol 4-phosphate (MEP). The chain is 2-C-methyl-D-erythritol 4-phosphate cytidylyltransferase from Syntrophotalea carbinolica (strain DSM 2380 / NBRC 103641 / GraBd1) (Pelobacter carbinolicus).